Here is a 156-residue protein sequence, read N- to C-terminus: Ribosomal RNA large subunit methyltransferase H (156 aa).

Residues Leu73, Gly104, and 123–128 (LSALTL) each bind S-adenosyl-L-methionine.

It belongs to the RNA methyltransferase RlmH family. In terms of assembly, homodimer.

Its subcellular location is the cytoplasm. It carries out the reaction pseudouridine(1915) in 23S rRNA + S-adenosyl-L-methionine = N(3)-methylpseudouridine(1915) in 23S rRNA + S-adenosyl-L-homocysteine + H(+). In terms of biological role, specifically methylates the pseudouridine at position 1915 (m3Psi1915) in 23S rRNA. The protein is Ribosomal RNA large subunit methyltransferase H of Shewanella loihica (strain ATCC BAA-1088 / PV-4).